The sequence spans 61 residues: MAKCFITGKKKSFGNSRSHAMNASRRTWKANLQKVRILVDGKPKRVWVSARALKSGKVKRV.

This sequence belongs to the bacterial ribosomal protein bL28 family.

In Geobacillus kaustophilus (strain HTA426), this protein is Large ribosomal subunit protein bL28.